Here is a 114-residue protein sequence, read N- to C-terminus: UPF0145 protein Acry_1752 (114 aa).

It belongs to the UPF0145 family.

The sequence is that of UPF0145 protein Acry_1752 from Acidiphilium cryptum (strain JF-5).